Reading from the N-terminus, the 321-residue chain is Beta-ketoacyl-[acyl-carrier-protein] synthase III (321 aa).

Catalysis depends on residues Cys-116 and His-248. The interval 249-253 (QANLR) is ACP-binding. The active site involves Asn-278.

It belongs to the thiolase-like superfamily. FabH family. In terms of assembly, homodimer.

The protein localises to the cytoplasm. The enzyme catalyses malonyl-[ACP] + acetyl-CoA + H(+) = 3-oxobutanoyl-[ACP] + CO2 + CoA. It participates in lipid metabolism; fatty acid biosynthesis. Its function is as follows. Catalyzes the condensation reaction of fatty acid synthesis by the addition to an acyl acceptor of two carbons from malonyl-ACP. Catalyzes the first condensation reaction which initiates fatty acid synthesis and may therefore play a role in governing the total rate of fatty acid production. Possesses both acetoacetyl-ACP synthase and acetyl transacylase activities. Its substrate specificity determines the biosynthesis of branched-chain and/or straight-chain of fatty acids. This is Beta-ketoacyl-[acyl-carrier-protein] synthase III from Yersinia enterocolitica serotype O:8 / biotype 1B (strain NCTC 13174 / 8081).